Reading from the N-terminus, the 521-residue chain is Glutamate--cysteine ligase (521 aa).

The protein belongs to the glutamate--cysteine ligase type 1 family. Type 1 subfamily.

It carries out the reaction L-cysteine + L-glutamate + ATP = gamma-L-glutamyl-L-cysteine + ADP + phosphate + H(+). It functions in the pathway sulfur metabolism; glutathione biosynthesis; glutathione from L-cysteine and L-glutamate: step 1/2. The chain is Glutamate--cysteine ligase from Aliivibrio salmonicida (strain LFI1238) (Vibrio salmonicida (strain LFI1238)).